The following is a 109-amino-acid chain: MRKQVLALSDTAAARIRQLLQHQQKPFLRLAVEAKGCNGLSYVLNYAQEKGKFDEVVEEKGVKILVDPKAVMHVIGTEMDFVDDKLRSEFVFVNPNATKCGCGESFTTT.

The transit peptide at methionine 1–glutamine 18 directs the protein to the mitochondrion. Cysteine 37, cysteine 100, and cysteine 102 together coordinate Fe cation.

The protein belongs to the HesB/IscA family. Homodimer; may form tetramers and higher multimers. Fe cation is required as a cofactor.

Its subcellular location is the mitochondrion. Its function is as follows. Involved in the assembly of mitochondrial iron-sulfur proteins. Probably involved in the binding of an intermediate of Fe/S cluster assembly. This is Iron-sulfur assembly protein IscA-like 3, mitochondrial from Arabidopsis thaliana (Mouse-ear cress).